Here is a 100-residue protein sequence, read N- to C-terminus: Integration host factor subunit alpha (100 aa).

The protein belongs to the bacterial histone-like protein family. As to quaternary structure, heterodimer of an alpha and a beta chain.

Functionally, this protein is one of the two subunits of integration host factor, a specific DNA-binding protein that functions in genetic recombination as well as in transcriptional and translational control. The protein is Integration host factor subunit alpha of Methylobacillus flagellatus (strain ATCC 51484 / DSM 6875 / VKM B-1610 / KT).